A 165-amino-acid polypeptide reads, in one-letter code: Neurotrophin-3 (165 aa).

A signal peptide spans 1 to 3; the sequence is IQS. The propeptide occupies 4–119; it reads TSMDQGSLSE…VLTXTSXXXR (116 aa).

It belongs to the NGF-beta family.

The protein localises to the secreted. Seems to promote the survival of visceral and proprioceptive sensory neurons. This chain is Neurotrophin-3 (NTF3), found in Tropidophis haetianus (Haitian dwarf boa).